A 711-amino-acid polypeptide reads, in one-letter code: Polyribonucleotide nucleotidyltransferase (711 aa).

2 residues coordinate Mg(2+): Asp491 and Asp497. Residues 559–618 form the KH domain; it reads PRLITIKINPEKIRDVIGKGGAVIRALTEETGTQIDISDEGVVTIASVDAAAGQEAKRRI. The 69-residue stretch at 628-696 folds into the S1 motif domain; it reads GKIYEGTVLK…DRGRLKLSMK (69 aa).

The protein belongs to the polyribonucleotide nucleotidyltransferase family. Mg(2+) serves as cofactor.

The protein resides in the cytoplasm. It catalyses the reaction RNA(n+1) + phosphate = RNA(n) + a ribonucleoside 5'-diphosphate. Involved in mRNA degradation. Catalyzes the phosphorolysis of single-stranded polyribonucleotides processively in the 3'- to 5'-direction. In Janthinobacterium sp. (strain Marseille) (Minibacterium massiliensis), this protein is Polyribonucleotide nucleotidyltransferase.